The primary structure comprises 354 residues: NADH-quinone oxidoreductase subunit H (354 aa).

The next 8 helical transmembrane spans lie at 25–45 (LVRILVVAVVILLCVAYLILW), 91–111 (WLYLVAPVMTVVPAFAVWAVI), 126–146 (LLYAMAISSIGVYAVILAGWA), 170–190 (MGFALVLVLMTAGSLNLSEIV), 205–225 (FLSWNWLPLLPVFVIYFISGI), 253–273 (MAFALFFLAEYINMIVISALA), 290–310 (FIPGIFWLVLKIFALLSVFIW), and 330–350 (VFLPVCVFWVIVVGFWMMSPL).

Belongs to the complex I subunit 1 family. In terms of assembly, NDH-1 is composed of 14 different subunits. Subunits NuoA, H, J, K, L, M, N constitute the membrane sector of the complex.

It localises to the cell inner membrane. It carries out the reaction a quinone + NADH + 5 H(+)(in) = a quinol + NAD(+) + 4 H(+)(out). In terms of biological role, NDH-1 shuttles electrons from NADH, via FMN and iron-sulfur (Fe-S) centers, to quinones in the respiratory chain. The immediate electron acceptor for the enzyme in this species is believed to be ubiquinone. Couples the redox reaction to proton translocation (for every two electrons transferred, four hydrogen ions are translocated across the cytoplasmic membrane), and thus conserves the redox energy in a proton gradient. This subunit may bind ubiquinone. The chain is NADH-quinone oxidoreductase subunit H from Burkholderia mallei (strain ATCC 23344).